The following is a 441-amino-acid chain: Arginine biosynthesis bifunctional protein ArgJ, mitochondrial (441 aa).

A mitochondrion-targeting transit peptide spans 1 to 8 (MRISSTLL). Substrate is bound by residues threonine 177, lysine 204, threonine 215, glutamate 301, asparagine 436, and serine 441. The Nucleophile role is filled by threonine 215.

It belongs to the ArgJ family. As to quaternary structure, heterodimer of an alpha and a beta chain. Post-translationally, the alpha and beta chains are autoproteolytically processed from a single precursor protein within the mitochondrion.

The protein localises to the mitochondrion matrix. It catalyses the reaction N(2)-acetyl-L-ornithine + L-glutamate = N-acetyl-L-glutamate + L-ornithine. It carries out the reaction L-glutamate + acetyl-CoA = N-acetyl-L-glutamate + CoA + H(+). It functions in the pathway amino-acid biosynthesis; L-arginine biosynthesis; L-ornithine and N-acetyl-L-glutamate from L-glutamate and N(2)-acetyl-L-ornithine (cyclic): step 1/1. The protein operates within amino-acid biosynthesis; L-arginine biosynthesis; N(2)-acetyl-L-ornithine from L-glutamate: step 1/4. With respect to regulation, inhibited by ornithine. In terms of biological role, catalyzes two activities which are involved in the cyclic version of arginine biosynthesis: the synthesis of acetylglutamate from glutamate and acetyl-CoA, and of ornithine by transacetylation between acetylornithine and glutamate. This is Arginine biosynthesis bifunctional protein ArgJ, mitochondrial from Saccharomyces cerevisiae (strain ATCC 204508 / S288c) (Baker's yeast).